Reading from the N-terminus, the 141-residue chain is Cystatin (141 aa).

The N-terminal stretch at 1-26 is a signal peptide; sequence MVHSQLPVAAPLRLLCALLLLPSATM. Residues 29–129 enclose the Cystatin domain; the sequence is GGLSPRSVTD…CHFQVWSRPW (101 aa). A Secondary area of contact motif is present at residues 73–77; that stretch reads QVVAG. Cystine bridges form between cysteine 91–cysteine 107 and cysteine 120–cysteine 140.

The protein belongs to the cystatin family. In terms of tissue distribution, expressed at a low level by the venom gland (at protein level).

It is found in the secreted. Its function is as follows. Inhibits various C1 cysteine proteases including cathepsin L, papain and cathepsin B. This protein has no toxic activity and its function in the venom is unknown. It may play a role as a housekeeping or regulatory protein. This chain is Cystatin, found in Pseudonaja textilis (Eastern brown snake).